Consider the following 78-residue polypeptide: Large ribosomal subunit protein bL28 (78 aa).

The protein belongs to the bacterial ribosomal protein bL28 family.

The sequence is that of Large ribosomal subunit protein bL28 from Azoarcus sp. (strain BH72).